Reading from the N-terminus, the 382-residue chain is Putative glutamate--cysteine ligase 2-1 (382 aa).

The protein belongs to the glutamate--cysteine ligase type 2 family. YbdK subfamily.

It carries out the reaction L-cysteine + L-glutamate + ATP = gamma-L-glutamyl-L-cysteine + ADP + phosphate + H(+). ATP-dependent carboxylate-amine ligase which exhibits weak glutamate--cysteine ligase activity. The polypeptide is Putative glutamate--cysteine ligase 2-1 (Nocardioides sp. (strain ATCC BAA-499 / JS614)).